Reading from the N-terminus, the 172-residue chain is Myosin regulatory light chain (172 aa).

The residue at position 17 (Thr17) is a Phosphothreonine. Phosphoserine is present on Ser18. EF-hand domains are found at residues 27 to 62 (AQIQ…LGKE), 98 to 133 (DPEE…MGER), and 134 to 168 (YSEE…GTKD). Positions 40, 42, 44, and 51 each coordinate Ca(2+).

As to quaternary structure, myosin is a hexamer of 2 heavy chains and 4 light chains (two regulatory light chains and two essential light chains). In terms of processing, may be phosphorylated by let-502 or/and pak-1 and dephosphorylated by mel-11 to regulate its activation and myosin II-mediated contraction. Expressed in the spermathecal and uterine walls. Weak expression in gonadal sheath and intestinal muscle. Not detected in vulval, pharyngeal or body wall muscles.

Its subcellular location is the cytoplasm. The protein localises to the cytoskeleton. Regulates myosin II activity and organization during embryo elongation. May be involved in the organization of mlc-5 into bundles. Required maternally for cytokinesis during meiosis and mitosis in the early embryo and for the establishment of embryonic anterior-posterior polarity. In Caenorhabditis elegans, this protein is Myosin regulatory light chain.